The following is a 122-amino-acid chain: Beta-2-microglobulin (122 aa).

The first 22 residues, 1 to 22 (MMARIFILALLGQLCFLPYLDA), serve as a signal peptide directing secretion. The Ig-like C1-type domain occupies 27 to 115 (PKVQVYSRHP…HLTLQEPKVV (89 aa)). Cysteines 47 and 102 form a disulfide.

This sequence belongs to the beta-2-microglobulin family. In terms of assembly, heterodimer of an alpha chain and a beta chain. Beta-2-microglobulin is the beta-chain of major histocompatibility complex class I molecules.

The protein localises to the secreted. Its function is as follows. Component of the class I major histocompatibility complex (MHC). Involved in the presentation of peptide antigens to the immune system. In Trichosurus vulpecula (Brush-tailed possum), this protein is Beta-2-microglobulin (B2M).